The following is a 235-amino-acid chain: Small ribosomal subunit protein uS2 (235 aa).

The protein belongs to the universal ribosomal protein uS2 family.

In Geobacillus stearothermophilus (Bacillus stearothermophilus), this protein is Small ribosomal subunit protein uS2 (rpsB).